A 312-amino-acid chain; its full sequence is Short chain dehydrogenase pgmD (312 aa).

Residues Val46, Ile47, Lys171, Tyr207, Lys211, and Thr242 each coordinate NADP(+). Tyr207 acts as the Proton donor in catalysis. Lys211 (lowers pKa of active site Tyr) is an active-site residue.

It belongs to the short-chain dehydrogenases/reductases (SDR) family.

Its pathway is pigment biosynthesis. It functions in the pathway secondary metabolite biosynthesis. Functionally, short chain dehydrogenase; part of the gene cluster that mediates the biosynthesis of pleosporalin A, ascomycone A, as well as a third cryptic naphthoquinone derived pigment, all responsible for the coloration of conidia. Essential for the production of pleosporalin A, but not the 2 other final products. The pathway begins with the biosynthesis of the cyclized heptaketide 3-acetonyl-1,6,8-trihydroxy-2-naphthaldehyde by the NR-PKS pgmA. The C-6 hydroxyl group is further methylated by the O-methyltransferase pgmB to yield fusarubinaldehyde which is in turn oxidized by the cytochrome P450 monooxygenase pgmC at C-9. The C-1 hydroxyl group is then methylated spontaneously. Although pgmE, pgmD and pgmH are essential for the production of pleosporalin A, it is not the case for the 2 other final products and it remains difficult to assign a specific function to each enzyme. PgmF and pgmG seem not to be involved in pigment biosynthesis although they were regulated by the cluster-specific transcription factor pgmR. This Aspergillus terreus (strain NIH 2624 / FGSC A1156) protein is Short chain dehydrogenase pgmD.